The following is a 159-amino-acid chain: Phosphopantetheine adenylyltransferase (159 aa).

Residue Ser9 participates in substrate binding. Residues 9–10 and His17 contribute to the ATP site; that span reads SF. Substrate contacts are provided by Lys41, Leu73, and Lys87. ATP contacts are provided by residues 88 to 90, Glu98, and 122 to 128; these read GLR and YSFLSSS.

This sequence belongs to the bacterial CoaD family. In terms of assembly, homohexamer. Mg(2+) serves as cofactor.

The protein resides in the cytoplasm. The catalysed reaction is (R)-4'-phosphopantetheine + ATP + H(+) = 3'-dephospho-CoA + diphosphate. Its pathway is cofactor biosynthesis; coenzyme A biosynthesis; CoA from (R)-pantothenate: step 4/5. Its function is as follows. Reversibly transfers an adenylyl group from ATP to 4'-phosphopantetheine, yielding dephospho-CoA (dPCoA) and pyrophosphate. The chain is Phosphopantetheine adenylyltransferase from Streptomyces griseus subsp. griseus (strain JCM 4626 / CBS 651.72 / NBRC 13350 / KCC S-0626 / ISP 5235).